The sequence spans 3658 residues: MKLRRRRASEVPTKISLFINSVTSVPLELIQEPLASFRWEFDKGDFHHWVDLFYHFDTFFEKHVKVRKDLRIEEEFDESDPPFPKDAVLQVLRVIRLVLENCTNKQFYTSYEQHLSLLLASTDADVVEACLQTLAAFLKRPTGKYSIRDASLNLKLFSLAQGWGGKEEGLGLTSCATEHSCDQLFLQLGCTLLFEFYASDESPSELPGGLQVIHVPDVSMRSESDLELLNKLVIDHNVPPSLRFALLTRLRFARAFSSLATRQQYTCIRLYAFIVLVQASGDTENVVSFFNGEPEFVNELVTLVSYEDTVPAKIRILCLQSLVALSQDRTRQPTVLTAVTSGGHRGLLSGLMQKAIDSVICNTSKWSLAFAEALLSLVTVLVSSSSGCSAMREAGLIPTLVPLIKDTDPQHLHLVSTAVHILEVFMDYSNPAAALFRDLGGLDDTIFRLKQEVSRTEDDVKEIVCCSGSNGPEDDTEQLPYSEALISYHRRLLLKALLRAISLGTYAPGNTNLYGSEESLLPECLCIIFRRAKDFGGGVFSLAATVMSDLIHKDPTCFNALDSAGLTSAFLDAISDEVICSAEAITCIPQCLDALCLNNSGLQAVKDRNALRCFVKIFSSPSYLKALTSDTPGSLSSGLDELLRHQSSLRTYGVDMFIEILNSILIIGSGMEATTSKSADVPTDAAPVPMEIDVDEKSLAVSDEAEPSSDTSPANIELFLPDCVCNVARLFETVLQNAEVCSLFVEKKGIDTVLQLFSLPLMPLSTSLGQSFSVAFKNFSPQHSAGLARILCSYLREHLKKTNNLLVSIEGTQLLKLESAVQTKILRSLSCLEGMLSLSNFLLKGSASVISELSAANADVLKELGITYKQTIWQMALCNDTKEDEKKSVDRASDNSVSASSSTAERESDEDSSNALAVRYTNPVSIRSSSSQSIWGGHREFLSVVRSGRGVHGHTRHAIARMRGGRTRRHLESFNFDSEIPADLPVTSSSHELKKKSTEVLIAEILNKLNCTLRFFFTSLVKGFTSANRRRIDGPSLSSASKTLGTALAKVFLEALNFQGYGAAAGPDTSLSLKCRYLGKVVDDITFLTFDTRRRVCFTAMVNSFYVHGTFKELLTTFEATSQLLWKVPFSIRASSTENEKSGERNLWSHSKWLVDTLQNYCRALDYFVNSTYLLSPTSQTQLLVQPASVDLSIGLFPVPREPETFVRNLQSQVLEVILPIWNHPMFPDCNPNFVASVTSLVTHIYSGVVDTRENRSGATQGTNQRALPLQPDEAIVGMIVEMGFSRSRAEDALRRVGTNSVEMAMDWLFTNPEDPVQEDDELAQALALSLGNSSETPKLEDTEKPVDVPQEEAEPKEPPVDEVIAASVKLFQSDDSIAFPLVDLFVTLCNRNKGEDRPKIVFYLIQQLKLVQLDFSKDTGALTMIPHILALVLSEDDNTREIAAQDGIVAVAIGILTDFNLKSESETDILAPKCISALLLVLSMMLQAQTRLSSEYVEGNQGGSLVLSDSPQDSTAALKDALSSDVAKGESNQALESMFGKSTGYLTMEESSKVLLIACGLIKQRVPAMIMQAVLQLCARLTKSHALAIQFLENGGLSSLFNLPKKCFFPGYDTVASVIVRHLVEDPQTLQIAMETEIRQTLSGKRHIGRVLPRTFLTTMAPVISRDPVVFMKAVASTCQLESSGGTDFVILTKEKEKPKVSGSEHGFSLNEPLGISENKLHDGSGKCSKSHRRVPTNFIQVIDQLIDIVLSFPGLKRQEGEAANLISMDVDEPTTKVKGKSKVGEPEKAELGSEKSEELARVTFILKLLSDIVLMYLHGTSVILRRDTEISQLRGSNLPDDSPGNGGLIYHVIHRLLPISLEKFVGPEEWKEKLSEKASWFLVVLCSRSNEGRKRIINELTRVLSVFASLGRSSSQSVLLPDKRVLAFANLVYSILTKNSSSSNFPGCGCSPDVAKSMIDGGTIQCLTSILNVIDLDHPDAPKLVTLILKSLETLTRAANAAEQLKSEVPNEQKNTDSDERHDSHGTSTSTEVDELNQNNSSLQQVTDAVDNGQEQPQVSSQSEGERGSSLTQAMLQEMRIEGDETILPEPIQMDFFREEIEGDQIEMSFHVEDRADDDVDDDMDDEGEDDEGDDEDADSVEDGAGVMSIAGTDVEDPEDTGLGDEYNDDMVDEDEEDEDEYNDDMVDEDEDDEDEYNDDMVDEDEDDFHETRVIEVRWREALDGLDHFQIVGRSGGGNGFIDDITAEPFEGVNVDDLFALRRSLGFERRRQTGRSSFDRSGSEVHGFQHPLFSRPSQTGNTASVSASAGSISRHSEAGSYDVAQFYMFDSPVLPFDQVPVDPFSDRLGGGGAPPPLTDYSVVGMDSSRRGVGDSRWTDVGHPQPSSLSASIAQLIEEHFITNLRASAPVDTVVERETNTTEVQEQQQPDVPPSVGSETVLGDGNEGGEQSEEHELLNNNEVMHPLPLNSTPNEIDRMEVGEGGGAPIEQVDREAVHLISSAQGQSDTSGIQNVSVTAIPPPVDDPDSNFQPSVDVDMSSDGAEGNQSVQPSPLDGDNNELSSMEATQDVRNDEQVDEGSLDGRAPEVNAIDPTFLEALPEDLRAEVLASQQAQSVQPPTYEPPSVDDIDPEFLAALPPEIQREVLAQQRAQRMLQQSQGQPVDMDNASIIATLPADLREEVLLTSSEAVLAALPPPLLAEAQMLRDRAMRHYQARSRVFGSSHRLNNRRNGLGYRLTGMERGVGVTIGQRDVSSSADGLKVKEIEGDPLVNADALKSLIRLLRLAQPLGKGLLQRLLLNLCAHSFTRANLVQLLLDMIRPEMETLPSELALTNPQRLYGCQLNVVYGRSQLLNGLPPLVFRRVLEVLTYLATNHSAVADMLFYFDSSLLSQLSSRKGKEKVTHETDSRDLEIPLVVFLKLLNRPQLLQSTSHLALVMGLLQVVVYTAASRIEGWSPSSGVPEKLENKPVGEEASSETQKDAESELSVARRKNCAELYNIFLQLPQSDLCNLCMLLGYEGLSDKIYSLAGEVLKKLAAVDVTHRKFFTKELSELASGLSSSTVRVLATLSTTQKMSQNTCSMAGASILRVLQVLSSLTSTIDDSNVGTDKETDQEEQNIMQGLKVALEPLWQELGQCISMTELQLDHTAATSNVNPGDHVLGISPTSSLSPGTQSLLPLIEAFFVLCEKIQTPSMLQQDATVTAGEVKESSTHGSSSKTIVDSQKKIDGSVTFSKFVEKHRRLLNSFVRQNPSLLEKSFSMMLKAPRLIDFDNKKAYFRSRIRHQHDQHISGPLRISVRRAYVLEDSYNQLRMRSPQDLKGRLNVQFQGEEGIDAGGLTREWYQLLSRVIFDKGALLFTTVGNDATFQPNPNSVYQTEHLSYFKFVGRMVAKALFDGQLLDVYFTRSFYKHILGVKVTYHDIEAVDPDYYKNLKWLLENDVSDILDLTFSMDADEEKHILYEKTEVTDYELKPGGRNIRVTEETKHEYVDLVADHILTSAIRPQINAFLEGLNELIPRELVSIFNDKELELLISGLPEIDFDDLKANTEYTSYTVGSPVIRWFWEVVKAFSKEDMARFLQFVTGTSKVPLEGFKALQGISGPQRLQIHKAYGSPERLPSAHTCFNQLDLPEYQSKEQVQERLLLAIHEANEGFGFA.

The span at 884–893 (DEKKSVDRAS) shows a compositional bias: basic and acidic residues. The tract at residues 884–914 (DEKKSVDRASDNSVSASSSTAERESDEDSSN) is disordered. Low complexity predominate over residues 894 to 903 (DNSVSASSST). The UBA domain maps to 1271-1312 (QPDEAIVGMIVEMGFSRSRAEDALRRVGTNSVEMAMDWLFTN). Residues 1318-1337 (QEDDELAQALALSLGNSSET) enclose the UIM domain. 9 disordered regions span residues 1331–1360 (LGNSSETPKLEDTEKPVDVPQEEAEPKEPP), 1702–1733 (VSGSEHGFSLNEPLGISENKLHDGSGKCSKSH), 2004–2038 (AEQLKSEVPNEQKNTDSDERHDSHGTSTSTEVDEL), 2052–2072 (VDNGQEQPQVSSQSEGERGSS), 2113–2204 (HVED…DDMV), 2293–2313 (PLFSRPSQTGNTASVSASAGS), 2417–2487 (ERET…EGGG), 2503–2591 (SAQG…PEVN), and 2958–2987 (SPSSGVPEKLENKPVGEEASSETQKDAESE). Over residues 1338–1347 (PKLEDTEKPV) the composition is skewed to basic and acidic residues. Basic and acidic residues predominate over residues 2007 to 2027 (LKSEVPNEQKNTDSDERHDSH). Over residues 2028–2038 (GTSTSTEVDEL) the composition is skewed to polar residues. Composition is skewed to acidic residues over residues 2117-2144 (RADDDVDDDMDDEGEDDEGDDEDADSVE) and 2156-2204 (DVED…DDMV). The span at 2297 to 2313 (RPSQTGNTASVSASAGS) shows a compositional bias: polar residues. Residues 2422–2431 (TTEVQEQQQP) show a composition bias toward low complexity. The span at 2503–2518 (SAQGQSDTSGIQNVSV) shows a compositional bias: polar residues. The residue at position 2582 (Ser-2582) is a Phosphoserine. The region spanning 3317-3658 (SPQDLKGRLN…HEANEGFGFA (342 aa)) is the HECT domain. The active-site Glycyl thioester intermediate is the Cys-3625.

It belongs to the UPL family. TOM1/PTR1 subfamily. As to expression, widely expressed. Expressed in root, stem, cauline and rosette leaf, seedling and flower (at protein level).

It catalyses the reaction S-ubiquitinyl-[E2 ubiquitin-conjugating enzyme]-L-cysteine + [acceptor protein]-L-lysine = [E2 ubiquitin-conjugating enzyme]-L-cysteine + N(6)-ubiquitinyl-[acceptor protein]-L-lysine.. It functions in the pathway protein modification; protein ubiquitination. Its function is as follows. Probable E3 ubiquitin-protein ligase which mediates ubiquitination and subsequent proteasomal degradation of target proteins. The chain is E3 ubiquitin-protein ligase UPL2 (UPL2) from Arabidopsis thaliana (Mouse-ear cress).